A 380-amino-acid chain; its full sequence is MTRVSLSPLAWLDEVETQRRAAGLRRTVRTRPPVGAELDLASNDYLGLSQHPRVIDGGVSALRTWGAGSTGSRLVTGNTELHEAFEDVLAAFVGAESALVFSSGYTANLGAVVALSGPGSLLVSDANTHASLVDACRLSRARVVVTPHNDTAAVEQALATRSEARAVVVTDSVFSADGDLAPLRALHTACRKHGALLIVDEAHGLGVRGDGGRGLLDEVGLAGAPDLVMTTTLSKALGSQGGVVLGPAAVRAHLIDTARPFIFDTGLAPAAVGAAFAALQVLIDEPWRAQRVLDHAATLASICDVTEVPSSAVVSVILGEPEVAFAAAAACLDRGVRVGCFRPPTVPAGTSRLRLTARASLSEDEMTLARRVLTEVLSPR.

Arg26 serves as a coordination point for substrate. Position 104–105 (104–105 (GY)) interacts with pyridoxal 5'-phosphate. Residue His129 participates in substrate binding. Residues Ser175, 200–203 (DEAH), and 232–235 (TLSK) contribute to the pyridoxal 5'-phosphate site. At Lys235 the chain carries N6-(pyridoxal phosphate)lysine. Thr345 contributes to the substrate binding site.

This sequence belongs to the class-II pyridoxal-phosphate-dependent aminotransferase family. BioF subfamily. As to quaternary structure, homodimer. Pyridoxal 5'-phosphate serves as cofactor.

It carries out the reaction 6-carboxyhexanoyl-[ACP] + L-alanine + H(+) = (8S)-8-amino-7-oxononanoate + holo-[ACP] + CO2. Its pathway is cofactor biosynthesis; biotin biosynthesis. Catalyzes the decarboxylative condensation of pimeloyl-[acyl-carrier protein] and L-alanine to produce 8-amino-7-oxononanoate (AON), [acyl-carrier protein], and carbon dioxide. This Mycolicibacterium vanbaalenii (strain DSM 7251 / JCM 13017 / BCRC 16820 / KCTC 9966 / NRRL B-24157 / PYR-1) (Mycobacterium vanbaalenii) protein is 8-amino-7-oxononanoate synthase.